The primary structure comprises 431 residues: Peroxisomal biogenesis factor 3 (431 aa).

Residues 1–10 lie on the Peroxisomal side of the membrane; sequence MDFFRRHQKK. Residues 11–28 form a helical membrane-spanning segment; that stretch reads VLALVGVALSSYLFIDYV. Over 29-431 the chain is Cytoplasmic; the sequence is KKKFFEIQGR…VVYSSFDWAL (403 aa). The segment at 95–126 is disordered; the sequence is TDRVLALESSTSSSATAQTVPTMTSGATEEGE. Positions 112-121 are enriched in polar residues; sequence QTVPTMTSGA.

The protein belongs to the peroxin-3 family.

It is found in the peroxisome membrane. Functionally, involved in peroxisome biosynthesis. Seems to directly or indirectly sequesters components of the peroxisome biogenesis machinery. The protein is Peroxisomal biogenesis factor 3 (PEX3) of Yarrowia lipolytica (strain CLIB 122 / E 150) (Yeast).